A 277-amino-acid chain; its full sequence is Lectin 1 (277 aa).

The signal sequence occupies residues 1–30; sequence MSFSSSNFYVILSISLTVFILLFNINKVNS. Asn143 carries an N-linked (GlcNAc...) asparagine glycan. Positions 152 and 154 each coordinate Mn(2+). Residues Asp154, Asn158, and Asp161 each coordinate Ca(2+). 2 residues coordinate Mn(2+): Asp161 and His167. Asn269 is a glycosylation site (N-linked (GlcNAc...) asparagine).

Belongs to the leguminous lectin family.

Its function is as follows. Lectin that may be involved in a cell recognition process. In Medicago truncatula (Barrel medic), this protein is Lectin 1 (LEC1).